We begin with the raw amino-acid sequence, 175 residues long: Protein UPS1, mitochondrial (175 aa).

Residues methionine 1–glutamate 80 form a required for mitochondrial targeting region. A PRELI/MSF1 domain is found at valine 2–asparagine 172. Residues tyrosine 26, lysine 58, lysine 148, and asparagine 152 each contribute to the a 1,2-diacyl-sn-glycero-3-phosphate site.

The protein belongs to the slowmo family. As to quaternary structure, interacts with MDM35. Found associated with a 170 kDa complex.

The protein localises to the mitochondrion inner membrane. The protein resides in the mitochondrion intermembrane space. Functionally, required for maintenance of normal mitochondrial morphology. Required for PCP1-dependent processing of MGM1. The UPS1:MDM35 complex mediates the transfer of phosphatidic acid (PA) between liposomes and probably functions as a PA transporter across the mitochondrion intermembrane space. Phosphatidic acid release requires dissociation of the UPS1:MDM35 complex. Phosphatidic acid import is required for cardiolipin (CL) synthesis in the mitochondrial inner membrane. With UPS2, controls the level of cardiolipin in mitochondria. Cardiolipin is a unique phospholipid with four fatty acid chains and is present mainly in the mitochondrial inner membrane where it stabilizes the electron transport chain supercomplex between complexes III and IV through direct interaction of their subunits. The protein is Protein UPS1, mitochondrial (UPS1) of Saccharomyces cerevisiae (strain ATCC 204508 / S288c) (Baker's yeast).